A 207-amino-acid polypeptide reads, in one-letter code: Transcriptional regulator YqjI (207 aa).

The segment covering 1-40 (MSHHHEGCCKHEGQPRHEGCCKGEKSEHEHCGHGHQHEHG) has biased composition (basic and acidic residues). Residues 1–46 (MSHHHEGCCKHEGQPRHEGCCKGEKSEHEHCGHGHQHEHGQCCGGR) are disordered.

As to quaternary structure, oligomer (probable predominant form) and monomer.

Its activity is regulated as follows. Divalent metals such as nickel and iron have a similar negative effect on YqjI DNA-binding activity. Its function is as follows. Represses the expression of YqjH which is involved in iron homeostasis under excess nickel conditions. Also represses its own expression. The polypeptide is Transcriptional regulator YqjI (yqjI) (Escherichia coli (strain K12)).